A 437-amino-acid chain; its full sequence is Adenylosuccinate synthetase, organellar chromatophore (437 aa).

Residues 12–18 and 40–42 each bind GTP; these read GDEGKGK and GHT. The active-site Proton acceptor is the D13. 2 residues coordinate Mg(2+): D13 and G40. IMP-binding positions include 13–16, 38–41, T128, R142, Q223, T238, and R302; these read DEGK and NAGH. The active-site Proton donor is the H41. Substrate is bound at residue 298 to 304; the sequence is TTTGRRR. GTP is bound by residues R304 and 330–332; that span reads KLD.

It belongs to the adenylosuccinate synthetase family. As to quaternary structure, homodimer. Requires Mg(2+) as cofactor.

It is found in the plastid. Its subcellular location is the organellar chromatophore. The catalysed reaction is IMP + L-aspartate + GTP = N(6)-(1,2-dicarboxyethyl)-AMP + GDP + phosphate + 2 H(+). It participates in purine metabolism; AMP biosynthesis via de novo pathway; AMP from IMP: step 1/2. Functionally, plays an important role in the de novo pathway and in the salvage pathway of purine nucleotide biosynthesis. Catalyzes the first committed step in the biosynthesis of AMP from IMP. The protein is Adenylosuccinate synthetase, organellar chromatophore of Paulinella chromatophora.